Here is a 2079-residue protein sequence, read N- to C-terminus: von Willebrand factor A domain-containing protein DDB_G0286969 (2079 aa).

Residues 11 to 147 form the VIT domain; the sequence is EQILPSFISI…ELEIIITYST (137 aa). The interval 178–203 is disordered; the sequence is NENSTTNTNTQTQPQSVNTTTTTTPS. Residues 180 to 203 are compositionally biased toward low complexity; that stretch reads NSTTNTNTQTQPQSVNTTTTTTPS. Residues 354 to 525 enclose the VWFA domain; sequence ELIFLVDVSE…KVMRQLKRAL (172 aa). Disordered stretches follow at residues 761-800, 832-866, 956-1139, 1155-1203, and 1239-1294; these read PTTL…LKTP, PFVP…TEVK, AKPV…TKPT, NEPA…VSST, and DSNT…ADAE. Composition is skewed to low complexity over residues 785–800, 841–866, and 956–973; these read TTQQ…LKTP, PTTT…TEVK, and AKPV…QQTK. The stretch at 923 to 957 forms a coiled coil; that stretch reads EMIKIAEAKAAAEQKAAAEQKAIADAKAAAEQAAK. A compositionally biased stretch (basic and acidic residues) spans 974 to 989; it reads PKADKQSKQNAKDNKQ. Residues 992–1006 show a composition bias toward low complexity; the sequence is KPVVVEQKPPVVTET. Residues 1007 to 1021 are compositionally biased toward polar residues; it reads KPTVATESATPTKPT. Low complexity predominate over residues 1023 to 1061; sequence AQAAAAAAAAAQQAAQQAAATTPVKQQPTKQTTPNKSTP. Positions 1092–1111 are enriched in basic and acidic residues; it reads KPVETKPVEQTKPVETKPVE. The span at 1176 to 1198 shows a compositional bias: low complexity; sequence NNNNNNNNNNNNNNNNNNNNNNN. The span at 1239 to 1272 shows a compositional bias: polar residues; that stretch reads DSNTKAPDSLKTTPIFSNGPQGISPSSGNGSNKS. Over residues 1280–1292 the composition is skewed to basic and acidic residues; sequence DRGGRGGRDRNAD. The region spanning 1317 to 1527 is the MIF4G domain; it reads LKKFKFNLNR…LDLIDLRANK (211 aa). The segment at 1530–1755 is disordered; that stretch reads PKNSTQTKTK…PAPVEPVKPK (226 aa). Composition is skewed to basic and acidic residues over residues 1538-1550, 1557-1599, and 1621-1634; these read TKKD…ERFI, QKRE…RDAP, and NNRD…DRSG. 2 stretches are compositionally biased toward low complexity: residues 1635-1659 and 1688-1699; these read GKQS…LFGS and SSSIPSIPNRSN. Basic and acidic residues predominate over residues 1725-1740; that stretch reads SNDRDSRGPSKPDNRK. Positions 1760–1882 constitute an MI domain; sequence KIEDDISMTL…PLNYLEEAYA (123 aa).

This is von Willebrand factor A domain-containing protein DDB_G0286969 from Dictyostelium discoideum (Social amoeba).